A 395-amino-acid chain; its full sequence is Acid ceramidase (395 aa).

A signal peptide spans 1–20 (MLGWSRLTFILLSGIVTCLV). A disulfide bridge links Cys31 with Cys340. The active-site Nucleophile is the Cys143. N-linked (GlcNAc...) asparagine glycans are attached at residues Asn195, Asn259, Asn286, and Asn342. A disulfide bridge connects residues Cys388 and Cys392.

Belongs to the acid ceramidase family. As to quaternary structure, heterodimer; disulfide-linked. The heterodimer is composed of the disulfide-linked alpha and beta chains produced by autocatalytic cleavage of the precursor. Post-translationally, N-glycosylated. In terms of processing, proteolytically cleaved into two chains alpha and beta that remain associated via a disulfide bond. Cleavage gives rise to a conformation change that activates the enzyme. The same catalytic Cys residue mediates the autoproteolytic cleavage and subsequent hydrolysis of lipid substrates. The beta chain may undergo an additional C-terminal processing.

It localises to the lysosome. Its subcellular location is the secreted. It catalyses the reaction an N-acylsphing-4-enine + H2O = sphing-4-enine + a fatty acid. The catalysed reaction is N-dodecanoylsphing-4-enine + H2O = dodecanoate + sphing-4-enine. The enzyme catalyses N-tetradecanoylsphing-4-enine + H2O = tetradecanoate + sphing-4-enine. It carries out the reaction N-hexadecanoylsphing-4-enine + H2O = sphing-4-enine + hexadecanoate. It catalyses the reaction N-octadecanoylsphing-4-enine + H2O = sphing-4-enine + octadecanoate. The catalysed reaction is N-dodecanoyl-(4R)-hydroxysphinganine + H2O = (4R)-hydroxysphinganine + dodecanoate. The enzyme catalyses N-(dodecanoyl)-sphinganine + H2O = dodecanoate + sphinganine. It carries out the reaction N-(acetyl)-sphing-4-enine + H2O = sphing-4-enine + acetate. It catalyses the reaction N-(hexanoyl)sphing-4-enine + H2O = hexanoate + sphing-4-enine. The catalysed reaction is N-octanoylsphing-4-enine + H2O = octanoate + sphing-4-enine. The enzyme catalyses N-(9Z-octadecenoyl)-sphing-4-enine + H2O = sphing-4-enine + (9Z)-octadecenoate. It carries out the reaction N-dodecanoylethanolamine + H2O = dodecanoate + ethanolamine. It functions in the pathway lipid metabolism; sphingolipid metabolism. Its function is as follows. Lysosomal ceramidase that hydrolyzes sphingolipid ceramides into sphingosine and free fatty acids at acidic pH. Ceramides, sphingosine, and its phosphorylated form sphingosine-1-phosphate are bioactive lipids that mediate cellular signaling pathways regulating several biological processes including cell proliferation, apoptosis and differentiation. Has a higher catalytic efficiency towards C12-ceramides versus other ceramides. Also catalyzes the reverse reaction allowing the synthesis of ceramides from fatty acids and sphingosine. For the reverse synthetic reaction, the natural sphingosine D-erythro isomer is more efficiently utilized as a substrate compared to D-erythro-dihydrosphingosine and D-erythro-phytosphingosine, while the fatty acids with chain lengths of 12 or 14 carbons are the most efficiently used. Also has an N-acylethanolamine hydrolase activity. By regulating the levels of ceramides, sphingosine and sphingosine-1-phosphate in the epidermis, mediates the calcium-induced differentiation of epidermal keratinocytes. Also indirectly regulates tumor necrosis factor/TNF-induced apoptosis. By regulating the intracellular balance between ceramides and sphingosine, in adrenocortical cells, probably also acts as a regulator of steroidogenesis. The protein is Acid ceramidase of Bos taurus (Bovine).